We begin with the raw amino-acid sequence, 85 residues long: MSNNFDHTMQFDFSKNKEDLTKSILTDVYNSLKEKGYNPVNQLVGYLISGDPTYITNYNGARALVRKLERDEILEEVIKSYLEIK.

The protein belongs to the UPF0297 family.

This chain is UPF0297 protein CPR_1749, found in Clostridium perfringens (strain SM101 / Type A).